Here is a 751-residue protein sequence, read N- to C-terminus: Semaphorin-3C (751 aa).

The first 21 residues, 1-21, serve as a signal peptide directing secretion; that stretch reads MAFRTICVLVGVFICSICVKG. Residues 28-511 form the Sema domain; the sequence is RVYLTFDELR…SNEGVSQVSL (484 aa). Asn81 is a glycosylation site (N-linked (GlcNAc...) asparagine). An intrachain disulfide couples Cys101 to Cys112. An N-linked (GlcNAc...) asparagine glycan is attached at Asn123. A disulfide bridge links Cys130 with Cys139. 2 N-linked (GlcNAc...) asparagine glycosylation sites follow: Asn252 and Asn268. Disulfide bonds link Cys266–Cys378 and Cys290–Cys338. Asn465 carries N-linked (GlcNAc...) asparagine glycosylation. Cys514 and Cys532 form a disulfide bridge. Positions 571 to 655 constitute an Ig-like C2-type domain; the sequence is AYRNAAEIVQ…TENSFKQTIA (85 aa). Residues Asn585 and Asn586 are each glycosylated (N-linked (GlcNAc...) asparagine). A disulfide bridge connects residues Cys592 and Cys643. Positions 712–731 are enriched in basic and acidic residues; that stretch reads TRQQHQQGDESQKMRGDYGK. The segment at 712 to 751 is disordered; that stretch reads TRQQHQQGDESQKMRGDYGKLKALINSRKSRNRRNQLPES.

Belongs to the semaphorin family. In terms of assembly, interacts with PLXND1.

The protein localises to the secreted. In terms of biological role, binds to plexin family members and plays an important role in the regulation of developmental processes. Required for normal cardiovascular development during embryogenesis. Functions as attractant for growing axons, and thereby plays an important role in axon growth and axon guidance. The polypeptide is Semaphorin-3C (SEMA3C) (Pongo abelii (Sumatran orangutan)).